The sequence spans 305 residues: Sodium/potassium-transporting ATPase subunit beta-1 (305 aa).

At 1 to 32 the chain is on the cytoplasmic side; sequence MAREKSTDDGGGWKKFLWDSEKKQVLGRTGTS. A helical; Signal-anchor for type II membrane protein membrane pass occupies residues 33–53; the sequence is WFKIFVFYLIFYGCLAGIFIG. Residues 54-305 are Extracellular-facing; that stretch reads TIQVMLLTIS…RFEVKIEVKS (252 aa). Residue asparagine 114 is glycosylated (N-linked (GlcNAc...) asparagine). A disulfide bond links cysteine 127 and cysteine 150. N-linked (GlcNAc...) asparagine glycosylation occurs at asparagine 159. Cysteine 160 and cysteine 176 are oxidised to a cystine. N-linked (GlcNAc...) asparagine glycans are attached at residues asparagine 194 and asparagine 267. The cysteines at positions 215 and 278 are disulfide-linked.

The protein belongs to the X(+)/potassium ATPases subunit beta family. In terms of assembly, the sodium/potassium-transporting ATPase is composed of a catalytic alpha subunit, an auxiliary non-catalytic beta subunit and an additional regulatory subunit.

The protein resides in the cell membrane. Its function is as follows. This is the non-catalytic component of the active enzyme, which catalyzes the hydrolysis of ATP coupled with the exchange of Na(+) and K(+) ions across the plasma membrane. The beta subunit regulates, through assembly of alpha/beta heterodimers, the number of sodium pumps transported to the plasma membrane. This chain is Sodium/potassium-transporting ATPase subunit beta-1 (atp1b1), found in Tetronarce californica (Pacific electric ray).